Here is a 167-residue protein sequence, read N- to C-terminus: Ribosome maturation factor RimM (167 aa).

A PRC barrel domain is found at 94 to 166 (QNRAWLHELE…YIVVPRFDEF (73 aa)).

It belongs to the RimM family. As to quaternary structure, binds ribosomal protein uS19.

It is found in the cytoplasm. Its function is as follows. An accessory protein needed during the final step in the assembly of 30S ribosomal subunit, possibly for assembly of the head region. Essential for efficient processing of 16S rRNA. May be needed both before and after RbfA during the maturation of 16S rRNA. It has affinity for free ribosomal 30S subunits but not for 70S ribosomes. In Chlorobium phaeovibrioides (strain DSM 265 / 1930) (Prosthecochloris vibrioformis (strain DSM 265)), this protein is Ribosome maturation factor RimM.